An 89-amino-acid chain; its full sequence is Neuropeptide F (89 aa).

Positions 1–29 (MASGTFTQRLLVALMIFALIADLSTLVAA) are cleaved as a signal peptide. At Phe61 the chain carries Phenylalanine amide. The propeptide occupies 65–89 (GGYLNPAIFGQDEQEVDWQDSTFSR).

It belongs to the NPY family.

The protein localises to the secreted. Its function is as follows. An integral part of the sensory system that mediates food signaling, providing the neural basis for the regulation of food response; coordinates larval foraging and social behavior changes during development. May have a hormonal role in females. The chain is Neuropeptide F from Anopheles gambiae (African malaria mosquito).